Reading from the N-terminus, the 95-residue chain is MSTEARDTIFIGKKPLMAYVTSTLIQLANIPSVNIKARGLSIGRAVDVAQIIARKTENAGYSIGEIKIGSESLESQDGRTRNVSTIEIEVKRNQA.

At lysine 13 the chain carries N6-acetyllysine.

The protein belongs to the histone-like Alba family. Acetylated. Acetylation at Lys-13 decreases DNA-binding affinity.

It localises to the cytoplasm. Its subcellular location is the chromosome. Binds double-stranded DNA tightly but without sequence specificity. Involved in DNA compaction. The chain is DNA/RNA-binding protein Alba from Nitrosopumilus maritimus (strain SCM1).